A 252-amino-acid polypeptide reads, in one-letter code: Mitochondrial cardiolipin hydrolase (252 aa).

Residues 1 to 4 lie on the Mitochondrial intermembrane side of the membrane; the sequence is MGRL. The interval 1–39 is required for mitochondrial localization; sequence MGRLSWQVAAAAAVGLALTLEALPWVLRWLRSRRRRPRR. A helical membrane pass occupies residues 5–27; the sequence is SWQVAAAAAVGLALTLEALPWVL. Topologically, residues 28-252 are cytoplasmic; the sequence is RWLRSRRRRP…TCGTSSESQT (225 aa). The C3H1-type; atypical zinc finger occupies 45–78; the sequence is PSQVTCTEALLRAPGAELAELPEGCPCGLPHGES. The PLD phosphodiesterase domain occupies 151 to 178; it reads DPGYMHHKFAIVDKRVLITGSLNWTTQA. Active-site residues include H156, K158, and D163.

It belongs to the phospholipase D family. MitoPLD/Zucchini subfamily. Homodimer. Interacts with MOV10L1. Interacts with MIGA1 and MIGA2; possibly facilitating homodimer formation. Interacts with GK2. Predominantly expressed in testis and ovary, but not limited to gonads (at protein level). It is also found in brain, heart, pituitary gland, prostate, pancreas, thyroid, bone marrow, lung and muscle.

It is found in the mitochondrion outer membrane. Its subcellular location is the golgi apparatus. It catalyses the reaction a cardiolipin + H2O = a 1,2-diacyl-sn-glycero-3-phospho-(1'-sn-glycerol) + a 1,2-diacyl-sn-glycero-3-phosphate + H(+). With respect to regulation, MYC stimulates its phospholipase activity. MIGA1 and MIGA2 increase PLD6 self-association affinity and affects the homodimer conformation facilitating its phospholipase activity over the nuclease activity. Single stranded DNA (ssDNA) hydrolase activity does not depend upon, but is stimulated by the presence of Ca(2+) and Mn(2+). In terms of biological role, presents phospholipase and nuclease activities, depending on the different physiological conditions. Interaction with Mitoguardin (MIGA1 or MIGA2) affects the dimer conformation, facilitating the lipase activity over the nuclease activity. Plays a key role in mitochondrial fusion and fission via its phospholipase activity. In its phospholipase role, it uses the mitochondrial lipid cardiolipin as substrate to generate phosphatidate (PA or 1,2-diacyl-sn-glycero-3-phosphate), a second messenger signaling lipid. Production of PA facilitates Mitofusin-mediated fusion, whereas the cleavage of PA by the Lipin family of phosphatases produces diacylgycerol (DAG) which promotes mitochondrial fission. Both Lipin and DAG regulate mitochondrial dynamics and membrane fusion/fission, important processes for adapting mitochondrial metabolism to changes in cell physiology. Mitochondrial fusion enables cells to cope with the increased nucleotide demand during DNA synthesis. Mitochondrial function and dynamics are closely associated with biological processes such as cell growth, proliferation, and differentiation. Mediator of MYC activity, promotes mitochondrial fusion and activates AMPK which in turn inhibits YAP/TAZ, thereby inducing cell growth and proliferation. The endonuclease activity plays a critical role in PIWI-interacting RNA (piRNA) biogenesis during spermatogenesis. Implicated in spermatogenesis and sperm fertility in testicular germ cells, its single strand-specific nuclease activity is critical for the biogenesis/maturation of PIWI-interacting RNA (piRNA). MOV10L1 selectively binds to piRNA precursors and funnels them to the endonuclease that catalyzes the first cleavage step of piRNA processing to generate piRNA intermediate fragments that are subsequently loaded to Piwi proteins. Cleaves either DNA or RNA substrates with similar affinity, producing a 5' phosphate end, in this way it participates in the processing of primary piRNA transcripts. piRNAs provide essential protection against the activity of mobile genetic elements. piRNA-mediated transposon silencing is thus critical for maintaining genome stability, in particular in germline cells when transposons are mobilized as a consequence of wide-spread genomic demethylation. PA may act as signaling molecule in the recognition/transport of the precursor RNAs of primary piRNAs. Interacts with tesmin in testes, suggesting a role in spermatogenesis via association with its interacting partner. The protein is Mitochondrial cardiolipin hydrolase (PLD6) of Homo sapiens (Human).